Reading from the N-terminus, the 427-residue chain is Glutamate-1-semialdehyde 2,1-aminomutase (427 aa).

Lysine 264 is subject to N6-(pyridoxal phosphate)lysine.

The protein belongs to the class-III pyridoxal-phosphate-dependent aminotransferase family. HemL subfamily. In terms of assembly, homodimer. Pyridoxal 5'-phosphate serves as cofactor.

The protein resides in the cytoplasm. The enzyme catalyses (S)-4-amino-5-oxopentanoate = 5-aminolevulinate. Its pathway is porphyrin-containing compound metabolism; protoporphyrin-IX biosynthesis; 5-aminolevulinate from L-glutamyl-tRNA(Glu): step 2/2. This chain is Glutamate-1-semialdehyde 2,1-aminomutase, found in Clostridium botulinum (strain Alaska E43 / Type E3).